We begin with the raw amino-acid sequence, 1404 residues long: DNA-directed RNA polymerase subunit beta' (1404 aa).

Zn(2+)-binding residues include Cys-70, Cys-72, Cys-85, and Cys-88. Residues Asp-460, Asp-462, and Asp-464 each coordinate Mg(2+). The Zn(2+) site is built by Cys-814, Cys-888, Cys-895, and Cys-898.

It belongs to the RNA polymerase beta' chain family. In terms of assembly, the RNAP catalytic core consists of 2 alpha, 1 beta, 1 beta' and 1 omega subunit. When a sigma factor is associated with the core the holoenzyme is formed, which can initiate transcription. The cofactor is Mg(2+). Zn(2+) serves as cofactor.

It carries out the reaction RNA(n) + a ribonucleoside 5'-triphosphate = RNA(n+1) + diphosphate. Functionally, DNA-dependent RNA polymerase catalyzes the transcription of DNA into RNA using the four ribonucleoside triphosphates as substrates. The protein is DNA-directed RNA polymerase subunit beta' of Shewanella amazonensis (strain ATCC BAA-1098 / SB2B).